The following is a 360-amino-acid chain: Phospho-N-acetylmuramoyl-pentapeptide-transferase (360 aa).

10 consecutive transmembrane segments (helical) span residues 26 to 46 (AILG…AMIR), 70 to 90 (GTPT…TLLW), 97 to 117 (FVWV…IDDY), 134 to 154 (FFWQ…TAQA), 168 to 188 (VAIQ…VGAS), 199 to 219 (GLAI…AYLS), 236 to 256 (VGDL…FLWF), 263 to 283 (VFMG…LAVV), 288 to 308 (IVLV…IMQV), and 338 to 358 (VIVR…ATLK).

It belongs to the glycosyltransferase 4 family. MraY subfamily. Mg(2+) is required as a cofactor.

Its subcellular location is the cell inner membrane. The enzyme catalyses UDP-N-acetyl-alpha-D-muramoyl-L-alanyl-gamma-D-glutamyl-meso-2,6-diaminopimeloyl-D-alanyl-D-alanine + di-trans,octa-cis-undecaprenyl phosphate = di-trans,octa-cis-undecaprenyl diphospho-N-acetyl-alpha-D-muramoyl-L-alanyl-D-glutamyl-meso-2,6-diaminopimeloyl-D-alanyl-D-alanine + UMP. It participates in cell wall biogenesis; peptidoglycan biosynthesis. In terms of biological role, catalyzes the initial step of the lipid cycle reactions in the biosynthesis of the cell wall peptidoglycan: transfers peptidoglycan precursor phospho-MurNAc-pentapeptide from UDP-MurNAc-pentapeptide onto the lipid carrier undecaprenyl phosphate, yielding undecaprenyl-pyrophosphoryl-MurNAc-pentapeptide, known as lipid I. The polypeptide is Phospho-N-acetylmuramoyl-pentapeptide-transferase (Thioalkalivibrio sulfidiphilus (strain HL-EbGR7)).